Here is a 305-residue protein sequence, read N- to C-terminus: Type II secretion system protein C (305 aa).

Topologically, residues 1–29 (MEFKQLPPLAAWPRLLSQNTLRWQKPISE) are cytoplasmic. Residues 30 to 50 (GLTLLLLVASAWTLGKMVWVV) traverse the membrane as a helical segment. Residues 51 to 305 (SAEQTPVPTW…GQQHDVYIQF (255 aa)) lie on the Periplasmic side of the membrane.

Belongs to the GSP C family.

Its subcellular location is the cell inner membrane. Involved in a type II secretion system (T2SS, formerly general secretion pathway, GSP) for the export of proteins. Required for secretion of cholera toxin through the outer membrane. The sequence is that of Type II secretion system protein C (epsC) from Vibrio cholerae serotype O1 (strain ATCC 39315 / El Tor Inaba N16961).